The chain runs to 84 residues: Protein SlyX homolog (84 aa).

The protein belongs to the SlyX family.

This chain is Protein SlyX homolog, found in Mannheimia succiniciproducens (strain KCTC 0769BP / MBEL55E).